Reading from the N-terminus, the 99-residue chain is Large ribosomal subunit protein uL23 (99 aa).

The protein belongs to the universal ribosomal protein uL23 family. In terms of assembly, part of the 50S ribosomal subunit. Contacts protein L29, and trigger factor when it is bound to the ribosome.

One of the early assembly proteins it binds 23S rRNA. One of the proteins that surrounds the polypeptide exit tunnel on the outside of the ribosome. Forms the main docking site for trigger factor binding to the ribosome. This is Large ribosomal subunit protein uL23 from Pseudomonas aeruginosa (strain LESB58).